The sequence spans 60 residues: Large ribosomal subunit protein uL30 (60 aa).

The protein belongs to the universal ribosomal protein uL30 family. Part of the 50S ribosomal subunit.

This is Large ribosomal subunit protein uL30 from Symbiobacterium thermophilum (strain DSM 24528 / JCM 14929 / IAM 14863 / T).